A 942-amino-acid chain; its full sequence is Leucine--tRNA ligase (942 aa).

Residues 41–51 (PYLNGVLHAGH) carry the 'HIGH' region motif. Positions 633 to 637 (KLSKS) match the 'KMSKS' region motif. Lysine 636 serves as a coordination point for ATP.

The protein belongs to the class-I aminoacyl-tRNA synthetase family.

Its subcellular location is the cytoplasm. The enzyme catalyses tRNA(Leu) + L-leucine + ATP = L-leucyl-tRNA(Leu) + AMP + diphosphate. This Methanocaldococcus jannaschii (strain ATCC 43067 / DSM 2661 / JAL-1 / JCM 10045 / NBRC 100440) (Methanococcus jannaschii) protein is Leucine--tRNA ligase.